A 723-amino-acid chain; its full sequence is Host cell factor 2 (723 aa).

4 Kelch repeats span residues 34–79, 83–130, 207–255, and 257–305; these read LMII…GFVC, RILV…RLGH, KMYV…VIGN, and MYIF…DSQE. Fibronectin type-III domains follow at residues 357–436, 516–606, and 608–720; these read PPAP…ANCT, TPSN…TCIP, and FPGA…SKKA. Residues 398–472 are disordered; that stretch reads AASPDASAAP…VALHSPLAPN (75 aa). The span at 419–433 shows a compositional bias: polar residues; that stretch reads QGSNSILHNSVSDPA.

Binds KMT2A/MLL1. Component of the MLL1/MLL complex, at least composed of KMT2A/MLL1, ASH2L, RBBP5, DPY30, WDR5, MEN1, HCFC1 and HCFC2. Interacts with TASOR.

It localises to the cytoplasm. The protein localises to the nucleus. The protein is Host cell factor 2 (Hcfc2) of Rattus norvegicus (Rat).